The following is a 347-amino-acid chain: NADH-ubiquinone oxidoreductase chain 2 (347 aa).

A run of 10 helical transmembrane segments spans residues 3–23, 25–45, 59–79, 89–109, 149–169, 178–198, 200–220, 237–257, 274–294, and 325–345; these read PIIY…VMIS, HWLL…PVLM, YFLT…INLL, MFNP…LGLS, INPN…GWGG, IMAY…PYNT, MTIL…MLLI, MPVI…LPPL, ESII…YFYM, and LLPT…ALSS.

Belongs to the complex I subunit 2 family. As to quaternary structure, core subunit of respiratory chain NADH dehydrogenase (Complex I) which is composed of 45 different subunits. Interacts with TMEM242.

It localises to the mitochondrion inner membrane. It carries out the reaction a ubiquinone + NADH + 5 H(+)(in) = a ubiquinol + NAD(+) + 4 H(+)(out). In terms of biological role, core subunit of the mitochondrial membrane respiratory chain NADH dehydrogenase (Complex I) which catalyzes electron transfer from NADH through the respiratory chain, using ubiquinone as an electron acceptor. Essential for the catalytic activity and assembly of complex I. The chain is NADH-ubiquinone oxidoreductase chain 2 from Sus scrofa (Pig).